A 63-amino-acid polypeptide reads, in one-letter code: Large ribosomal subunit protein bL32c (63 aa).

The tract at residues 39–63 (SFSSGNEHPKPKGFSGQQTNNKIFE) is disordered. Positions 53-63 (SGQQTNNKIFE) are enriched in polar residues.

Belongs to the bacterial ribosomal protein bL32 family.

Its subcellular location is the plastid. It is found in the chloroplast. The polypeptide is Large ribosomal subunit protein bL32c (Triticum aestivum (Wheat)).